Here is a 367-residue protein sequence, read N- to C-terminus: 3-dehydroquinate synthase (367 aa).

Residues 69 to 74, 103 to 107, 127 to 128, Lys140, and Lys149 contribute to the NAD(+) site; these read DGEAFK, GVIGD, and TT. Residues Glu182, His245, and His262 each contribute to the Zn(2+) site.

It belongs to the sugar phosphate cyclases superfamily. Dehydroquinate synthase family. It depends on Co(2+) as a cofactor. Zn(2+) serves as cofactor. NAD(+) is required as a cofactor.

It localises to the cytoplasm. The catalysed reaction is 7-phospho-2-dehydro-3-deoxy-D-arabino-heptonate = 3-dehydroquinate + phosphate. The protein operates within metabolic intermediate biosynthesis; chorismate biosynthesis; chorismate from D-erythrose 4-phosphate and phosphoenolpyruvate: step 2/7. Its function is as follows. Catalyzes the conversion of 3-deoxy-D-arabino-heptulosonate 7-phosphate (DAHP) to dehydroquinate (DHQ). The protein is 3-dehydroquinate synthase of Pseudomonas syringae pv. syringae (strain B728a).